Here is a 330-residue protein sequence, read N- to C-terminus: tRNA dimethylallyltransferase (330 aa).

Over residues 1–11 (MDYSHSDSPST) the composition is skewed to polar residues. A disordered region spans residues 1–21 (MDYSHSDSPSTAPAGKTPVDQ). 29–36 (GPTGAGKS) provides a ligand contact to ATP. Residue 31-36 (TGAGKS) participates in substrate binding. The segment at 56-59 (DSMQ) is interaction with substrate tRNA.

Belongs to the IPP transferase family. Monomer. Requires Mg(2+) as cofactor.

The catalysed reaction is adenosine(37) in tRNA + dimethylallyl diphosphate = N(6)-dimethylallyladenosine(37) in tRNA + diphosphate. Its function is as follows. Catalyzes the transfer of a dimethylallyl group onto the adenine at position 37 in tRNAs that read codons beginning with uridine, leading to the formation of N6-(dimethylallyl)adenosine (i(6)A). The polypeptide is tRNA dimethylallyltransferase (Corynebacterium urealyticum (strain ATCC 43042 / DSM 7109)).